Here is a 141-residue protein sequence, read N- to C-terminus: VLSPADKTNVKSTWDKIGGHAGEYGGEALERTFVSFPTTKTYFPHFDLSPGSAQVKAHGKKVADALTLAVGHLDDLAGALSALSDLHAHKLRVDPVNFKLLSHCLLVTLACHHPAEFTPAVHASLDKFFSTVSTVLTSKYR.

A Globin domain is found at 1-141 (VLSPADKTNV…VSTVLTSKYR (141 aa)). Serine 3 bears the Phosphoserine mark. At lysine 7 the chain carries N6-succinyllysine. Residue threonine 8 is modified to Phosphothreonine. Lysine 11 is subject to N6-succinyllysine. N6-acetyllysine; alternate is present on lysine 16. Lysine 16 carries the post-translational modification N6-succinyllysine; alternate. At tyrosine 24 the chain carries Phosphotyrosine. Serine 35 is modified (phosphoserine). An N6-succinyllysine modification is found at lysine 40. Residue serine 49 is modified to Phosphoserine. Histidine 58 contacts O2. Histidine 87 serves as a coordination point for heme b. Serine 102 carries the post-translational modification Phosphoserine. Threonine 108 is subject to Phosphothreonine. The residue at position 124 (serine 124) is a Phosphoserine. Phosphothreonine occurs at positions 134 and 137. Phosphoserine is present on serine 138.

This sequence belongs to the globin family. As to quaternary structure, heterotetramer of two alpha chains and two beta chains. In terms of tissue distribution, red blood cells.

In terms of biological role, involved in oxygen transport from the lung to the various peripheral tissues. Hemopressin acts as an antagonist peptide of the cannabinoid receptor CNR1. Hemopressin-binding efficiently blocks cannabinoid receptor CNR1 and subsequent signaling. This Martes foina (Beech marten) protein is Hemoglobin subunit alpha (HBA).